The chain runs to 93 residues: Parbolysin P4 (93 aa).

3 disulfides stabilise this stretch: Cys-16/Cys-37, Cys-22/Cys-33, and Cys-47/Cys-60.

The protein belongs to the worm cytolysin family. As to expression, localized within the skin and proboscis and are most readily isolated from body mucus secretions.

The protein localises to the secreted. Its function is as follows. Cytolysin that shows hemolytic activity (on bovine erythrocytes, HC(50)=5.75 mg/ml). This hemolytic activity is completely inhibited by small unilamelar vesicles composed of PC/PG, PC/PI and PC/PS in 1:1 molar ratios (with at least 100 mg/ml concentration). This chain is Parbolysin P4, found in Parborlasia corrugatus (Antarctic nemertean worm).